Consider the following 295-residue polypeptide: Acetylglutamate kinase (295 aa).

Substrate-binding positions include 70 to 71 (GG), Arg-92, and Asn-191.

The protein belongs to the acetylglutamate kinase family. ArgB subfamily.

Its subcellular location is the cytoplasm. The enzyme catalyses N-acetyl-L-glutamate + ATP = N-acetyl-L-glutamyl 5-phosphate + ADP. The protein operates within amino-acid biosynthesis; L-arginine biosynthesis; N(2)-acetyl-L-ornithine from L-glutamate: step 2/4. Its function is as follows. Catalyzes the ATP-dependent phosphorylation of N-acetyl-L-glutamate. The polypeptide is Acetylglutamate kinase (Mycolicibacterium paratuberculosis (strain ATCC BAA-968 / K-10) (Mycobacterium paratuberculosis)).